The chain runs to 602 residues: Bifunctional lycopene cyclase/phytoene synthase (602 aa).

The lycopene beta-cyclase stretch occupies residues 1–238 (MLTYMEVHLY…LVFASCATDR (238 aa)). A run of 7 helical transmembrane segments spans residues 7–27 (VHLYFTLPVLALLAFLYKPFF), 35–55 (YIFLCTVAFATASPWDNYIVY), 69–89 (VIGYVPLEEYMFFIIMTLITV), 110–130 (PVFQSVCVRYIPIVGFLTIAA), 142–162 (PFYGACILWYVCPVLALLWIG), 173–193 (AVLFSIAVPTIFLCWVDQYAI), and 211–231 (LPSLPLEEFLFFLLIDTVLVF). The tract at residues 245-602 (IYITPMNHNK…RGKSQAFTVI (358 aa)) is phytoene synthase.

This sequence in the N-terminal section; belongs to the lycopene beta-cyclase family. In the C-terminal section; belongs to the phytoene/squalene synthase family.

The protein localises to the membrane. The catalysed reaction is all-trans-lycopene = gamma-carotene. It catalyses the reaction gamma-carotene = all-trans-beta-carotene. It carries out the reaction 2 (2E,6E,10E)-geranylgeranyl diphosphate = 15-cis-phytoene + 2 diphosphate. It participates in carotenoid biosynthesis; beta-carotene biosynthesis. Its pathway is carotenoid biosynthesis; phytoene biosynthesis; all-trans-phytoene from geranylgeranyl diphosphate: step 1/1. In terms of biological role, bifunctional enzyme that catalyzes the reactions from geranylgeranyl diphosphate to phytoene (phytoene synthase) and lycopene to beta-carotene via the intermediate gamma-carotene (lycopene cyclase). This is Bifunctional lycopene cyclase/phytoene synthase from Phycomyces blakesleeanus (strain ATCC 8743b / DSM 1359 / FGSC 10004 / NBRC 33097 / NRRL 1555).